A 139-amino-acid chain; its full sequence is Plastocyanin (139 aa).

Positions 1-34 (MKLIAASLRRLSLAVLTVLLVVSSFAVFTPSASA) are cleaved as a signal peptide. The 105-residue stretch at 35–139 (ETYTVKLGSD…GMVGKITVAG (105 aa)) folds into the Plastocyanin-like domain. Cu cation-binding residues include histidine 73, cysteine 123, histidine 126, and methionine 131.

It belongs to the plastocyanin family. It depends on Cu(2+) as a cofactor.

The protein localises to the cellular thylakoid membrane. Its function is as follows. Participates in electron transfer between P700 and the cytochrome b6-f complex in photosystem I. This chain is Plastocyanin (petE), found in Nostoc sp. (strain PCC 7120 / SAG 25.82 / UTEX 2576).